Consider the following 476-residue polypeptide: Adenosylhomocysteinase (476 aa).

Substrate contacts are provided by T67, D142, and E202. Residue 203 to 205 participates in NAD(+) binding; it reads TTT. Substrate is bound by residues K232 and D236. NAD(+)-binding positions include N237, 266–271, E289, N324, 345–347, and N390; these read GYGDVG and IGH.

Belongs to the adenosylhomocysteinase family. NAD(+) serves as cofactor.

Its subcellular location is the cytoplasm. It catalyses the reaction S-adenosyl-L-homocysteine + H2O = L-homocysteine + adenosine. It participates in amino-acid biosynthesis; L-homocysteine biosynthesis; L-homocysteine from S-adenosyl-L-homocysteine: step 1/1. Its function is as follows. May play a key role in the regulation of the intracellular concentration of adenosylhomocysteine. In Prochlorococcus marinus (strain MIT 9211), this protein is Adenosylhomocysteinase.